The sequence spans 4518 residues: Dynein axonemal heavy chain 11 (4518 aa).

Positions 1 to 1857 (MAASVAAQEA…LVHICDAQFQ (1857 aa)) are stem. AAA stretches follow at residues 1858–2079 (YFYE…VLVV), 2139–2368 (QMVR…TSFK), 2474–2721 (TMDP…VFQG), and 2819–3068 (NYND…EGRH). ATP contacts are provided by residues 1896 to 1903 (GPAGTGKT), 2177 to 2184 (GNAGTGKS), 2512 to 2519 (GNAGVGKT), and 2857 to 2864 (GVGGSGKQ). A stalk region spans residues 3074–3405 (KSFLEQISLF…GQSIKSFEAQ (332 aa)). Residues 3322 to 3391 (LAQANLELAT…NRLVKELEVK (70 aa)) are a coiled coil. 2 AAA regions span residues 3461–3688 (LTDD…EIER) and 3898–4124 (LRNF…VLYN).

Belongs to the dynein heavy chain family. In terms of assembly, consists of at least two heavy chains and a number of intermediate and light chains. Interacts with CFAP45.

It is found in the cytoplasm. The protein resides in the cytoskeleton. Its subcellular location is the cilium axoneme. Its function is as follows. Force generating protein of respiratory cilia. Produces force towards the minus ends of microtubules. Dynein has ATPase activity; the force-producing power stroke is thought to occur on release of ADP. The protein is Dynein axonemal heavy chain 11 (DNAH11) of Sus scrofa (Pig).